Here is a 184-residue protein sequence, read N- to C-terminus: Probable RNA 2'-phosphotransferase (184 aa).

The protein belongs to the KptA/TPT1 family.

Removes the 2'-phosphate from RNA via an intermediate in which the phosphate is ADP-ribosylated by NAD followed by a presumed transesterification to release the RNA and generate ADP-ribose 1''-2''-cyclic phosphate (APPR&gt;P). May function as an ADP-ribosylase. The polypeptide is Probable RNA 2'-phosphotransferase (Rhodopirellula baltica (strain DSM 10527 / NCIMB 13988 / SH1)).